We begin with the raw amino-acid sequence, 204 residues long: Sex-determining region Y protein (204 aa).

Residues 59 to 136 (RVKRPMNAFI…YKYRPRRKAK (78 aa)) form a sufficient for interaction with KPNB1 region. Positions 60-128 (VKRPMNAFIV…MHREKYPNYK (69 aa)) form a DNA-binding region, HMG box. 2 required for nuclear localization regions span residues 61 to 77 (KRPMNAFIVWSRDQRRK) and 130 to 136 (RPRRKAK). Positions 107–139 (WPFFQEAQKLQAMHREKYPNYKYRPRRKAKMLP) are sufficient for interaction with EP300. N6-acetyllysine is present on K136. The segment at 138 to 155 (LPKNCSLLPADPASVLCS) is necessary for interaction with ZNF208 isoform KRAB-O. The tract at residues 175-204 (RMEHQLGHLPPINAASSPQQRDRYSHWTKL) is disordered. Basic and acidic residues predominate over residues 194-204 (QRDRYSHWTKL). The tract at residues 198 to 204 (YSHWTKL) is necessary for interaction with SLC9A3R2.

This sequence belongs to the SRY family. As to quaternary structure, interacts with CALM, EP300, HDAC3, KPNB1, ZNF208 isoform KRAB-O, PARP1, SLC9A3R2 and WT1. The interaction with EP300 modulates its DNA-binding activity. The interaction with KPNB1 is sensitive to dissociation by Ran in the GTP-bound form. Interaction with PARP1 impaired its DNA-binding activity. Phosphorylated on serine residues by PKA. Phosphorylation by PKA enhances its DNA-binding activity and stimulates transcription repression. In terms of processing, acetylation of Lys-136 contributes to its nuclear localization and enhances its interaction with KPNB1. Deacetylated by HDAC3. Post-translationally, poly-ADP-ribosylated by PARP1. ADP-ribosylation reduces its DNA-binding activity.

It is found in the nucleus speckle. Its subcellular location is the cytoplasm. The protein localises to the nucleus. In terms of biological role, transcriptional regulator that controls a genetic switch in male development. It is necessary and sufficient for initiating male sex determination by directing the development of supporting cell precursors (pre-Sertoli cells) as Sertoli rather than granulosa cells. Involved in different aspects of gene regulation including promoter activation or repression. Binds to the DNA consensus sequence 5'-[AT]AACAA[AT]-3'. SRY HMG box recognizes DNA by partial intercalation in the minor groove and promotes DNA bending. Also involved in pre-mRNA splicing. In male adult brain involved in the maintenance of motor functions of dopaminergic neurons. This Homo sapiens (Human) protein is Sex-determining region Y protein.